The following is a 247-amino-acid chain: UDP-2,3-diacylglucosamine hydrolase (247 aa).

Positions 8, 10, 41, 79, and 114 each coordinate Mn(2+). Position 79-80 (79-80 (NR)) interacts with substrate. Substrate-binding residues include Asp-122, Ser-160, Asp-171, Arg-174, and His-202. 2 residues coordinate Mn(2+): His-202 and His-204.

Belongs to the LpxH family. Requires Mn(2+) as cofactor.

It is found in the cell inner membrane. The enzyme catalyses UDP-2-N,3-O-bis[(3R)-3-hydroxytetradecanoyl]-alpha-D-glucosamine + H2O = 2-N,3-O-bis[(3R)-3-hydroxytetradecanoyl]-alpha-D-glucosaminyl 1-phosphate + UMP + 2 H(+). It participates in glycolipid biosynthesis; lipid IV(A) biosynthesis; lipid IV(A) from (3R)-3-hydroxytetradecanoyl-[acyl-carrier-protein] and UDP-N-acetyl-alpha-D-glucosamine: step 4/6. Its function is as follows. Hydrolyzes the pyrophosphate bond of UDP-2,3-diacylglucosamine to yield 2,3-diacylglucosamine 1-phosphate (lipid X) and UMP by catalyzing the attack of water at the alpha-P atom. Involved in the biosynthesis of lipid A, a phosphorylated glycolipid that anchors the lipopolysaccharide to the outer membrane of the cell. The polypeptide is UDP-2,3-diacylglucosamine hydrolase (Xanthomonas axonopodis pv. citri (strain 306)).